The chain runs to 225 residues: Probable methylthioribulose-1-phosphate dehydratase (225 aa).

Cys-86 contacts substrate. His-104 and His-106 together coordinate Zn(2+). Glu-127 (proton donor/acceptor) is an active-site residue. His-183 lines the Zn(2+) pocket.

Belongs to the aldolase class II family. MtnB subfamily. It depends on Zn(2+) as a cofactor.

The protein resides in the cytoplasm. It catalyses the reaction 5-(methylsulfanyl)-D-ribulose 1-phosphate = 5-methylsulfanyl-2,3-dioxopentyl phosphate + H2O. It participates in amino-acid biosynthesis; L-methionine biosynthesis via salvage pathway; L-methionine from S-methyl-5-thio-alpha-D-ribose 1-phosphate: step 2/6. In terms of biological role, catalyzes the dehydration of methylthioribulose-1-phosphate (MTRu-1-P) into 2,3-diketo-5-methylthiopentyl-1-phosphate (DK-MTP-1-P). The protein is Probable methylthioribulose-1-phosphate dehydratase of Leishmania braziliensis.